Consider the following 77-residue polypeptide: U14-theraphotoxin-Cg1a 3 (77 aa).

Residues 1-21 (MKTSVLLVILGIAAITVQCTA) form the signal peptide. The propeptide occupies 22–49 (SESVEQDSLRTFVDTVLGWNAEMASEAR). Intrachain disulfides connect C50-C64, C57-C69, and C63-C75. K77 bears the Lysine amide mark.

The protein belongs to the neurotoxin 10 (Hwtx-1) family. 65 (Jztx-21) subfamily. As to expression, expressed by the venom gland.

Its subcellular location is the secreted. Probable ion channel inhibitor. This chain is U14-theraphotoxin-Cg1a 3, found in Chilobrachys guangxiensis (Chinese earth tiger tarantula).